The sequence spans 211 residues: Scoloptoxin SSD43 (211 aa).

Residues 1-20 (MNFVIYGVIVVLTSQLYVDG) form the signal peptide.

In terms of processing, contains 3 disulfide bonds. In terms of tissue distribution, expressed by the venom gland.

It is found in the secreted. Its function is as follows. Shows trypsin inhibiting activity. The protein is highly thermally stable, since its incubation in boiling water during 10 minutes does not reduce its activity. The chain is Scoloptoxin SSD43 from Scolopendra dehaani (Thai centipede).